The following is a 283-amino-acid chain: S-methyl-5'-thioadenosine phosphorylase (283 aa).

A phosphate-binding site is contributed by threonine 18. Lysine 51 carries the post-translational modification N6-acetyllysine. Residues 60 to 61 (RH) and 93 to 94 (TA) contribute to the phosphate site. Residue methionine 196 participates in substrate binding. Residue threonine 197 participates in phosphate binding. Residue 220–222 (DYD) participates in substrate binding.

This sequence belongs to the PNP/MTAP phosphorylase family. MTAP subfamily. As to quaternary structure, homotrimer. As to expression, ubiquitously expressed.

The protein localises to the cytoplasm. The protein resides in the nucleus. It catalyses the reaction S-methyl-5'-thioadenosine + phosphate = 5-(methylsulfanyl)-alpha-D-ribose 1-phosphate + adenine. It functions in the pathway amino-acid biosynthesis; L-methionine biosynthesis via salvage pathway; S-methyl-5-thio-alpha-D-ribose 1-phosphate from S-methyl-5'-thioadenosine (phosphorylase route): step 1/1. With respect to regulation, inhibited by 5'-methylthiotubercin and 5'-chloroformycin. Catalyzes the reversible phosphorylation of S-methyl-5'-thioadenosine (MTA) to adenine and 5-methylthioribose-1-phosphate. Involved in the breakdown of MTA, a major by-product of polyamine biosynthesis. Responsible for the first step in the methionine salvage pathway after MTA has been generated from S-adenosylmethionine. Has broad substrate specificity with 6-aminopurine nucleosides as preferred substrates. In Homo sapiens (Human), this protein is S-methyl-5'-thioadenosine phosphorylase.